Consider the following 119-residue polypeptide: Ribonuclease P protein component (119 aa).

The protein belongs to the RnpA family. As to quaternary structure, consists of a catalytic RNA component (M1 or rnpB) and a protein subunit.

The catalysed reaction is Endonucleolytic cleavage of RNA, removing 5'-extranucleotides from tRNA precursor.. Its function is as follows. RNaseP catalyzes the removal of the 5'-leader sequence from pre-tRNA to produce the mature 5'-terminus. It can also cleave other RNA substrates such as 4.5S RNA. The protein component plays an auxiliary but essential role in vivo by binding to the 5'-leader sequence and broadening the substrate specificity of the ribozyme. The sequence is that of Ribonuclease P protein component from Mycobacterium avium (strain 104).